A 341-amino-acid chain; its full sequence is MLETNDSVCELAYQLAYHPVYRSSQFWSMLVSSLSIPALIYFITRKIFFLHFHGNLKCLLIVYFICNLLFSMALCFAFFYQFLIPFFVTSKCQLLINTTLFKWGQICSFLLLTSSMLLPIGFSIERFVALGNAQKYESSRTFLGPVIIFIIIAVDFSIIFSVYKNEPFTEGFYSFILVPSTTASQINMYFFVLLFVKIFNLLLNCILLRIHKKIRIKYYSLSVRYEMEEILQSSKFTFIIRFTHLLFFGFYVVVILFVRIMGESFFNGTLNYSVARGVFCTVPTYNLIIVIIGIKSLRHLNLQRLNKVQSTVQIKSTGKEGSKNYEDIITNYWDSVSSRTP.

Residues 1–23 (MLETNDSVCELAYQLAYHPVYRS) are Extracellular-facing. Asn5 is a glycosylation site (N-linked (GlcNAc...) asparagine). A helical membrane pass occupies residues 24–44 (SQFWSMLVSSLSIPALIYFIT). Residues 45–58 (RKIFFLHFHGNLKC) are Cytoplasmic-facing. A helical transmembrane segment spans residues 59–79 (LLIVYFICNLLFSMALCFAFF). Over 80-103 (YQFLIPFFVTSKCQLLINTTLFKW) the chain is Extracellular. The N-linked (GlcNAc...) asparagine glycan is linked to Asn97. Residues 104 to 124 (GQICSFLLLTSSMLLPIGFSI) form a helical membrane-spanning segment. Over 125-141 (ERFVALGNAQKYESSRT) the chain is Cytoplasmic. Residues 142 to 162 (FLGPVIIFIIIAVDFSIIFSV) form a helical membrane-spanning segment. At 163–187 (YKNEPFTEGFYSFILVPSTTASQIN) the chain is on the extracellular side. A helical membrane pass occupies residues 188–208 (MYFFVLLFVKIFNLLLNCILL). Residues 209–237 (RIHKKIRIKYYSLSVRYEMEEILQSSKFT) are Cytoplasmic-facing. Residues 238–258 (FIIRFTHLLFFGFYVVVILFV) form a helical membrane-spanning segment. At 259–276 (RIMGESFFNGTLNYSVAR) the chain is on the extracellular side. 2 N-linked (GlcNAc...) asparagine glycosylation sites follow: Asn267 and Asn271. A helical transmembrane segment spans residues 277 to 297 (GVFCTVPTYNLIIVIIGIKSL). At 298–341 (RHLNLQRLNKVQSTVQIKSTGKEGSKNYEDIITNYWDSVSSRTP) the chain is on the cytoplasmic side.

This sequence belongs to the nematode receptor-like protein srb family. As to expression, expressed throughout the head.

Its subcellular location is the cell membrane. It is found in the perikaryon. The protein resides in the cell projection. It localises to the dendrite. Its function is as follows. G-protein coupled receptor. The sequence is that of Serpentine receptor class beta-3 from Caenorhabditis elegans.